Here is a 299-residue protein sequence, read N- to C-terminus: Putative ankyrin repeat protein R864 (299 aa).

7 ANK repeats span residues 78 to 107, 108 to 137, 139 to 167, 168 to 197, 199 to 227, 228 to 257, and 258 to 287; these read SLNK…NIES, NNNY…NIKS, NNRV…DIRS, NDDY…DIRS, YYYI…DIRA, YNNC…DIRN, and DNDY…DIKT.

The sequence is that of Putative ankyrin repeat protein R864 from Acanthamoeba polyphaga mimivirus (APMV).